The sequence spans 230 residues: Uracil-DNA glycosylase (230 aa).

Aspartate 65 (proton acceptor) is an active-site residue.

This sequence belongs to the uracil-DNA glycosylase (UDG) superfamily. UNG family.

The protein localises to the cytoplasm. It carries out the reaction Hydrolyzes single-stranded DNA or mismatched double-stranded DNA and polynucleotides, releasing free uracil.. Its function is as follows. Excises uracil residues from the DNA which can arise as a result of misincorporation of dUMP residues by DNA polymerase or due to deamination of cytosine. The sequence is that of Uracil-DNA glycosylase from Lactiplantibacillus plantarum (strain ATCC BAA-793 / NCIMB 8826 / WCFS1) (Lactobacillus plantarum).